A 413-amino-acid chain; its full sequence is 3-oxoacyl-[acyl-carrier-protein] synthase 2 (413 aa).

The Ketosynthase family 3 (KS3) domain occupies K3 to K412. Active-site for beta-ketoacyl synthase activity residues include C164, H304, and H341.

It belongs to the thiolase-like superfamily. Beta-ketoacyl-ACP synthases family. As to quaternary structure, homodimer.

It carries out the reaction a fatty acyl-[ACP] + malonyl-[ACP] + H(+) = a 3-oxoacyl-[ACP] + holo-[ACP] + CO2. The catalysed reaction is (9Z)-hexadecenoyl-[ACP] + malonyl-[ACP] + H(+) = 3-oxo-(11Z)-octadecenoyl-[ACP] + holo-[ACP] + CO2. The protein operates within lipid metabolism; fatty acid biosynthesis. Involved in the type II fatty acid elongation cycle. Catalyzes the elongation of a wide range of acyl-ACP by the addition of two carbons from malonyl-ACP to an acyl acceptor. Can efficiently catalyze the conversion of palmitoleoyl-ACP (cis-hexadec-9-enoyl-ACP) to cis-vaccenoyl-ACP (cis-octadec-11-enoyl-ACP), an essential step in the thermal regulation of fatty acid composition. This chain is 3-oxoacyl-[acyl-carrier-protein] synthase 2 (fabF), found in Escherichia coli O157:H7.